Consider the following 833-residue polypeptide: Leucine--tRNA ligase (833 aa).

The 'HIGH' region motif lies at 41 to 52 (PYPSGAGLHVGH). A 'KMSKS' region motif is present at residues 610-614 (KMSKS). ATP is bound at residue Lys-613.

Belongs to the class-I aminoacyl-tRNA synthetase family.

The protein localises to the cytoplasm. It carries out the reaction tRNA(Leu) + L-leucine + ATP = L-leucyl-tRNA(Leu) + AMP + diphosphate. The polypeptide is Leucine--tRNA ligase (Streptococcus pyogenes serotype M6 (strain ATCC BAA-946 / MGAS10394)).